A 259-amino-acid polypeptide reads, in one-letter code: Hydroxyacylglutathione hydrolase (259 aa).

Residues H56, H58, D60, H61, H112, D133, and H171 each coordinate Zn(2+).

The protein belongs to the metallo-beta-lactamase superfamily. Glyoxalase II family. In terms of assembly, monomer. The cofactor is Zn(2+).

It carries out the reaction an S-(2-hydroxyacyl)glutathione + H2O = a 2-hydroxy carboxylate + glutathione + H(+). It functions in the pathway secondary metabolite metabolism; methylglyoxal degradation; (R)-lactate from methylglyoxal: step 2/2. Thiolesterase that catalyzes the hydrolysis of S-D-lactoyl-glutathione to form glutathione and D-lactic acid. The polypeptide is Hydroxyacylglutathione hydrolase (Pseudomonas putida (strain ATCC 700007 / DSM 6899 / JCM 31910 / BCRC 17059 / LMG 24140 / F1)).